The primary structure comprises 89 residues: Small ribosomal subunit protein uS15 (89 aa).

Belongs to the universal ribosomal protein uS15 family. As to quaternary structure, part of the 30S ribosomal subunit. Forms a bridge to the 50S subunit in the 70S ribosome, contacting the 23S rRNA.

One of the primary rRNA binding proteins, it binds directly to 16S rRNA where it helps nucleate assembly of the platform of the 30S subunit by binding and bridging several RNA helices of the 16S rRNA. Functionally, forms an intersubunit bridge (bridge B4) with the 23S rRNA of the 50S subunit in the ribosome. The protein is Small ribosomal subunit protein uS15 of Orientia tsutsugamushi (strain Boryong) (Rickettsia tsutsugamushi).